Here is a 688-residue protein sequence, read N- to C-terminus: Small ribosomal subunit protein mS39 (688 aa).

A mitochondrion-targeting transit peptide spans 1-37 (MASVASARWLRVSCGLCVPLTARRAGPCGRTPSSRFY). The residue at position 126 (Lys-126) is an N6-acetyllysine. 10 PPR repeats span residues 149 to 183 (IEEISEAALQERIKLKKVKASVDIFDQLLQAGTTV), 184 to 219 (SLETTNSLLDLLCYYGNQEPSTNYNFQQHEQTEELE), 258 to 292 (NAHSYCTMIRGMVKHRAHTQALSMYTELLNNRLRA), 293 to 333 (DVHT…NVKP), 334 to 370 (NLQTFNTILKCLRRFYAFGKLPALQTFREMKAIGIEP), 371 to 412 (SLAT…SPKD), 415 to 449 (DDMFFQSAMRVCSSLRDLELAYQVHGLLNTGDNRK), 457 to 491 (RNFYYSKFFSLLCLMEQIDVTLKWYKDLIPSVFFP), 492 to 526 (HSQTLIDLLQALDVANRLEMIPQIWKDSKEYGHTF), and 575 to 609 (PANSLNYIAILFLRAGRTQEAWKMLGLFRKHNKIP). The tract at residues 667 to 688 (GDLTALTSDSESDSDSDTSKDK) is disordered.

Belongs to the mitochondrion-specific ribosomal protein mS39 family. In terms of assembly, component of the mitochondrial ribosome small subunit (28S) which comprises a 12S rRNA and about 30 distinct proteins. Associated with the 12S mitochondrial rRNA (12S mt-rRNA).

It is found in the mitochondrion. In terms of biological role, mitochondrial RNA-binding protein that has a role in mitochondrial translation. The polypeptide is Small ribosomal subunit protein mS39 (PTCD3) (Bos taurus (Bovine)).